The sequence spans 956 residues: Translation initiation factor IF-2 (956 aa).

The tract at residues 50 to 351 (FPADSGGAAN…APSIGGVQVP (302 aa)) is disordered. Residues 64-95 (APKPARAPKPAPKAAPAPPVEEAPAEPAPPAA) are compositionally biased toward pro residues. 2 stretches are compositionally biased toward low complexity: residues 96–107 (PEVVAAPEAPVA) and 121–136 (PEAP…ARPA). Positions 146-155 (AAEKPADTRT) are enriched in basic and acidic residues. 2 stretches are compositionally biased toward gly residues: residues 171 to 192 (RPGG…GGPR) and 206 to 234 (RPGG…GQGG). Positions 235-254 (SRPSPGMMPGRSAVGRPGAP) are enriched in low complexity. Positions 255-320 (ARGGSGGPGG…GTQGAFGRAG (66 aa)) are enriched in gly residues. Positions 324–333 (VRARKSRRAK) are enriched in basic residues. A tr-type G domain is found at 448-619 (ARPPVVTVMG…AVLLTADAAL (172 aa)). Residues 457–464 (GHVDHGKT) form a G1 region. GTP is bound at residue 457 to 464 (GHVDHGKT). The segment at 482-486 (GITQH) is G2. Residues 507 to 510 (DTPG) form a G3 region. GTP contacts are provided by residues 507 to 511 (DTPGH) and 561 to 564 (NKVD). The segment at 561 to 564 (NKVD) is G4. A G5 region spans residues 597 to 599 (SAK).

The protein belongs to the TRAFAC class translation factor GTPase superfamily. Classic translation factor GTPase family. IF-2 subfamily.

The protein resides in the cytoplasm. Its function is as follows. One of the essential components for the initiation of protein synthesis. Protects formylmethionyl-tRNA from spontaneous hydrolysis and promotes its binding to the 30S ribosomal subunits. Also involved in the hydrolysis of GTP during the formation of the 70S ribosomal complex. The polypeptide is Translation initiation factor IF-2 (Beutenbergia cavernae (strain ATCC BAA-8 / DSM 12333 / CCUG 43141 / JCM 11478 / NBRC 16432 / NCIMB 13614 / HKI 0122)).